Here is a 64-residue protein sequence, read N- to C-terminus: MKIFTLYTMIQQYFFDNGGVYSIKNFYSAVPKEKMNIILVSLDCELQKLALKLSKKTSGTHTTH.

This is an uncharacterized protein from Saccharomyces cerevisiae (strain ATCC 204508 / S288c) (Baker's yeast).